The sequence spans 366 residues: Adenine DNA glycosylase (366 aa).

A DNA-binding site is contributed by 30–31 (WR). Residue Glu43 is the Proton donor/acceptor of the active site. Residues 48–49 (QT), 86–88 (LGY), Tyr126, and Glu188 contribute to the DNA site. The HhH domain occupies 105 to 133 (RYGGKVPDDPDEFSRLKGVGPYTVGAVLS). Residues Cys198, Cys205, Cys208, and Cys214 each contribute to the [4Fe-4S] cluster site. Ser308 is a binding site for DNA.

It belongs to the Nth/MutY family. The cofactor is [4Fe-4S] cluster.

It carries out the reaction Hydrolyzes free adenine bases from 7,8-dihydro-8-oxoguanine:adenine mismatched double-stranded DNA, leaving an apurinic site.. Functionally, base excision repair (BER) glycosylase that initiates repair of A:oxoG to C:G by removing the inappropriately paired adenine base from the DNA backbone, generating an abasic site product. 8-oxoguanine (oxoG) is a genotoxic DNA lesion resulting from oxidation of guanine; this residue is misread by replicative DNA polymerases, that insert adenine instead of cytosine opposite the oxidized damaged base. Shows a powerful dicrimination of A versus C, since it does not cleave cytosine in oxoG:C pairs. May also be able to remove adenine from A:G mispairs, although this activity may not be physiologically relevant. In Geobacillus stearothermophilus (Bacillus stearothermophilus), this protein is Adenine DNA glycosylase.